We begin with the raw amino-acid sequence, 213 residues long: General transcription factor 3C polypeptide 6 (213 aa).

A compositionally biased stretch (basic and acidic residues) spans 1 to 11 (MAAAADERSPE). 2 disordered regions span residues 1–20 (MAAA…EEEE) and 191–213 (SGPL…QMLP). N-acetylalanine is present on Ala2. Phosphoserine is present on Ser9.

The protein belongs to the TFIIIC subunit 6 family. Part of the TFIIIC subcomplex TFIIIC2, consisting of six subunits, GTF3C1, GTF3C2, GTF3C3, GTF3C4, GTF3C5 and GTF3C6. Interacts with GTF3C4 and GTF3C5.

The protein localises to the nucleus. In terms of biological role, involved in RNA polymerase III-mediated transcription. Integral, tightly associated component of the DNA-binding TFIIIC2 subcomplex that directly binds tRNA and virus-associated RNA promoters. This is General transcription factor 3C polypeptide 6 (GTF3C6) from Homo sapiens (Human).